We begin with the raw amino-acid sequence, 343 residues long: Glucokinase (343 aa).

Position 21-26 (21-26 (ADVGGT)) interacts with ATP.

Belongs to the bacterial glucokinase family.

It is found in the cytoplasm. The catalysed reaction is D-glucose + ATP = D-glucose 6-phosphate + ADP + H(+). This chain is Glucokinase, found in Cupriavidus pinatubonensis (strain JMP 134 / LMG 1197) (Cupriavidus necator (strain JMP 134)).